Here is a 371-residue protein sequence, read N- to C-terminus: 3-isopropylmalate dehydrogenase (371 aa).

4 residues coordinate substrate: arginine 104, arginine 114, arginine 142, and aspartate 232. The Mg(2+) site is built by aspartate 232, aspartate 256, and aspartate 260. 290–302 lines the NAD(+) pocket; sequence GSAPDIAGQDKAN.

The protein belongs to the isocitrate and isopropylmalate dehydrogenases family. LeuB type 1 subfamily. As to quaternary structure, homodimer. Mg(2+) is required as a cofactor. Requires Mn(2+) as cofactor.

The protein localises to the cytoplasm. It carries out the reaction (2R,3S)-3-isopropylmalate + NAD(+) = 4-methyl-2-oxopentanoate + CO2 + NADH. Its pathway is amino-acid biosynthesis; L-leucine biosynthesis; L-leucine from 3-methyl-2-oxobutanoate: step 3/4. Its function is as follows. Catalyzes the oxidation of 3-carboxy-2-hydroxy-4-methylpentanoate (3-isopropylmalate) to 3-carboxy-4-methyl-2-oxopentanoate. The product decarboxylates to 4-methyl-2 oxopentanoate. The protein is 3-isopropylmalate dehydrogenase of Synechococcus sp. (strain JA-2-3B'a(2-13)) (Cyanobacteria bacterium Yellowstone B-Prime).